A 121-amino-acid chain; its full sequence is MSRTKGGTVTHARHKKVIKAAKGYYGRRKSTFKVARQAVDKANQYATRDRKNRKRNFRALWIQRINAAVRSHDEALTYSRFINGLNLAGIEVDRKVLADLAVHEPEAFGAIVKQAQDALAA.

Belongs to the bacterial ribosomal protein bL20 family.

Functionally, binds directly to 23S ribosomal RNA and is necessary for the in vitro assembly process of the 50S ribosomal subunit. It is not involved in the protein synthesizing functions of that subunit. This Roseobacter denitrificans (strain ATCC 33942 / OCh 114) (Erythrobacter sp. (strain OCh 114)) protein is Large ribosomal subunit protein bL20.